Reading from the N-terminus, the 85-residue chain is Sec-independent protein translocase protein TatA (85 aa).

A helical transmembrane segment spans residues 1 to 21; the sequence is MGSFSIWHWLIVLLIIMMVFG. Positions 39–51 are enriched in basic and acidic residues; it reads FKEGMREGSEDKP. A disordered region spans residues 39–85; it reads FKEGMREGSEDKPAGSQQGQQAAGQPPRELHDSTTIDVEARDKSKQG. Low complexity predominate over residues 52–65; the sequence is AGSQQGQQAAGQPP. The segment covering 66–85 has biased composition (basic and acidic residues); it reads RELHDSTTIDVEARDKSKQG.

It belongs to the TatA/E family. As to quaternary structure, the Tat system comprises two distinct complexes: a TatABC complex, containing multiple copies of TatA, TatB and TatC subunits, and a separate TatA complex, containing only TatA subunits. Substrates initially bind to the TatABC complex, which probably triggers association of the separate TatA complex to form the active translocon.

The protein localises to the cell inner membrane. In terms of biological role, part of the twin-arginine translocation (Tat) system that transports large folded proteins containing a characteristic twin-arginine motif in their signal peptide across membranes. TatA could form the protein-conducting channel of the Tat system. This chain is Sec-independent protein translocase protein TatA, found in Ralstonia nicotianae (strain ATCC BAA-1114 / GMI1000) (Ralstonia solanacearum).